The chain runs to 100 residues: Urease subunit gamma (100 aa).

It belongs to the urease gamma subunit family. As to quaternary structure, heterotrimer of UreA (gamma), UreB (beta) and UreC (alpha) subunits. Three heterotrimers associate to form the active enzyme.

The protein resides in the cytoplasm. The enzyme catalyses urea + 2 H2O + H(+) = hydrogencarbonate + 2 NH4(+). It functions in the pathway nitrogen metabolism; urea degradation; CO(2) and NH(3) from urea (urease route): step 1/1. This chain is Urease subunit gamma, found in Nocardia farcinica (strain IFM 10152).